A 48-amino-acid chain; its full sequence is Disintegrin leucogastin-A (48 aa).

Residues aspartate 1–proline 47 form the Disintegrin domain. 4 disulfides stabilise this stretch: cysteine 2–cysteine 11, cysteine 7–cysteine 32, cysteine 8–cysteine 37, and cysteine 20–cysteine 39. The Cell attachment site signature appears at arginine 24–aspartate 26.

It belongs to the venom metalloproteinase (M12B) family. P-II subfamily. P-IIa sub-subfamily. Monomer (disintegrin). As to expression, expressed by the venom gland.

It is found in the secreted. Its function is as follows. Inhibits ADP-induced human platelet aggregation. The sequence is that of Disintegrin leucogastin-A from Echis leucogaster (Roman's saw-scaled viper).